We begin with the raw amino-acid sequence, 342 residues long: Phomopsin biosynthesis cluster protein B' (342 aa).

Residues 1–22 (MESIAKAKSLPNKGRTYDSQRP) form a disordered region. The helical transmembrane segment at 87–107 (VLIIGCAVISLFAIIGALGFA) threads the bilayer. The tract at residues 118 to 186 (CASPAHQNPH…QCGESPDEAQ (69 aa)) is disordered. A compositionally biased stretch (low complexity) spans 144-155 (HSGSHSSSSSTN). N-linked (GlcNAc...) asparagine glycosylation occurs at Asn248.

It is found in the membrane. Functionally, part of the gene cluster that mediates the biosynthesis of the phomopsins, a group of hexapeptide mycotoxins which infects lupins and causes lupinosis disease in livestock. The role of phomB' within the phomopsins biosynthesis pathway has still to be determined. The pathway starts with the processing of the precursor phomA by several endopeptidases including kexin proteases as well as the cluster-specific S41 family peptidase phomP1 and the oligopeptidase phomG to produce 10 identical copies of the hexapeptide Tyr-Val-Ile-Pro-Ile-Asp. After being excised from the precursor peptide, the core peptides are cyclized and modified post-translationally by enzymes encoded within the gene cluster. The timing and order of proteolysis of the phomA precursor and PTMs are still unknown. Two tyrosinase-like enzymes, phomQ1 and phomQ2, catalyze the chlorination and hydroxylation of Tyr, respectively. PhomYb, is proposed to be involved in the construction of the macrocyclic structure. The other 4 ustYa family proteins may be involved in PTMs that generate the unique structure of phomopsin A. PhomYa is required for the hydroxylation of C-beta of Tyr. PhomYc, phomYd, and phomYe are responsible for the biosynthesis of 2,3-dehydroisoleucine (dIle), 2,3-dehydroaspartic acid (dAsp), and 3,4-dehydroproline (dPro), respectively. While dIle formation by phomYc is indispensable for the installation of dAsp by phomYd, the order of the other PTMs have not been elucidated yet. Most of the biosynthetic enzymes likely have broad substrate specificity, and thus, there might be a metabolic grid from a precursor to phomopsin A. The enzyme(s) responsible for the biosynthesis of 3,4-dehydrovaline (dVal) have also not been identified yet. Finally, phomM acts as an S-adenosylmethionine-dependent alpha-N-methyltransferase that catalyzes two successive N-methylation reactions, converting N-desmethyl-phomopsin A to phomopsin A and phomopsin A further to an N,N-dimethylated congener called phomopsin E. The protein is Phomopsin biosynthesis cluster protein B' of Diaporthe leptostromiformis (Lupinosis disease fungus).